We begin with the raw amino-acid sequence, 327 residues long: Olfactory receptor 6A2 (327 aa).

The Extracellular segment spans residues 1–26 (MEWRNHSGRVSEFVLLGFPAPAPLQV). An N-linked (GlcNAc...) asparagine glycan is attached at Asn5. The chain crosses the membrane as a helical span at residues 27–47 (LLFALLLLAYVLVLTENTLII). The Cytoplasmic portion of the chain corresponds to 48–55 (MAIRNHST). The helical transmembrane segment at 56-76 (LHKPMYFFLANMSFLEIWYVT) threads the bilayer. The Extracellular segment spans residues 77–104 (VTIPKMLAGFVGSKQDHGQLISFEGCMT). A disulfide bridge links Cys102 with Cys194. A helical transmembrane segment spans residues 105-125 (QLYFFLGLGCTECVLLAVMAY). Residues 126 to 144 (DRYMAICYPLHYPVIVSGR) are Cytoplasmic-facing. The chain crosses the membrane as a helical span at residues 145–165 (LCVQMAAGSWAGGFGISMVKV). The Extracellular portion of the chain corresponds to 166–201 (FLISGLSYCGPNIINHFFCDVSPLLNLSCTDMSTAE). N-linked (GlcNAc...) asparagine glycosylation occurs at Asn191. The chain crosses the membrane as a helical span at residues 202 to 222 (LTDFILAIFILLGPLSVTGAS). Residues 223–242 (YVAITGAVMHIPSAAGRYKA) lie on the Cytoplasmic side of the membrane. The chain crosses the membrane as a helical span at residues 243 to 263 (FSTCASHLTVVIIFYAASIFI). The Extracellular portion of the chain corresponds to 264–276 (YARPKALSAFDTN). Residues 277 to 297 (KLVSVLYAVIVPLLNPIIYCL) traverse the membrane as a helical segment. The Cytoplasmic portion of the chain corresponds to 298–327 (RNQEVKRALCCTLHLYQHQDPDPKKASRNV).

Belongs to the G-protein coupled receptor 1 family.

The protein localises to the cell membrane. Its function is as follows. Odorant receptor. This Homo sapiens (Human) protein is Olfactory receptor 6A2 (OR6A2).